A 142-amino-acid chain; its full sequence is Alpha-lactalbumin (142 aa).

The signal sequence occupies residues 1 to 19; it reads MRFFVPLFLVGILFPAILA. The region spanning 20 to 142 is the C-type lysozyme domain; that stretch reads KQFTKCELSQ…KLEQWLCEKL (123 aa). 4 disulfide bridges follow: Cys-25-Cys-139, Cys-47-Cys-130, Cys-80-Cys-96, and Cys-92-Cys-110. 2 residues coordinate Ca(2+): Thr-57 and Gln-58. N-linked (GlcNAc...) asparagine glycosylation occurs at Asn-64. Zn(2+) is bound at residue Glu-68. The N-linked (GlcNAc...) asparagine; atypical; partial glycan is linked to Asn-90. Ca(2+)-binding residues include Lys-98, Leu-100, Asp-101, Asp-102, Asp-103, Asp-106, and Asp-107. Glu-135 is a binding site for Zn(2+).

Belongs to the glycosyl hydrolase 22 family. As to quaternary structure, lactose synthase (LS) is a heterodimer of a catalytic component, beta1,4-galactosyltransferase (beta4Gal-T1) and a regulatory component, alpha-lactalbumin (LA). As to expression, mammary gland specific. Secreted in milk.

It is found in the secreted. Its function is as follows. Regulatory subunit of lactose synthase, changes the substrate specificity of galactosyltransferase in the mammary gland making glucose a good acceptor substrate for this enzyme. This enables LS to synthesize lactose, the major carbohydrate component of milk. In other tissues, galactosyltransferase transfers galactose onto the N-acetylglucosamine of the oligosaccharide chains in glycoproteins. This chain is Alpha-lactalbumin (LALBA), found in Homo sapiens (Human).